A 341-amino-acid chain; its full sequence is N-(sulfonatooxy)alkenimidothioic acid sulfate-lyase (epithionitrile-forming) (341 aa).

Residues 1–24 (MAPTLQGQWIKVGQKGGTGPGPRS) are disordered. 4 Kelch repeats span residues 34 to 82 (KLYS…VRMV), 87 to 133 (KIYI…FHSM), 139 to 194 (HVYV…VVQG), and 203 to 249 (ATSI…AHAV). K46, R94, T129, F130, R157, G186, K211, and V244 together coordinate a (Z)-N-(sulfonatooxy)alkanimidothioate. The active-site Proton donor is the R94. Residue R157 is the Proton donor of the active site. Fe(2+) contacts are provided by E260, D264, and H268. W303 lines the a (Z)-N-(sulfonatooxy)alkanimidothioate pocket.

As to quaternary structure, homodimer. Interacts with WRKY53. The cofactor is Fe(2+). Expressed in epidermal cells of all above-ground organs except the anthers, in cambial cells of leaf and stem vascular bundles, and in glucosinolates rich S-cells found in stems just below the inflorescence. Absent from roots.

The protein localises to the cytoplasm. The protein resides in the nucleus. It catalyses the reaction a (Z)-N-(sulfonatooxy)alkenimidothioate = an epithionitrile + sulfate. The catalysed reaction is a (Z)-N-(sulfonatooxy)alkanimidothioate = a nitrile + sulfur + sulfate. It carries out the reaction (Z)-(indol-3-yl)-N-(sulfonatooxy)methanimidothioate = (indol-3-yl)acetonitrile + sulfur + sulfate. With respect to regulation, not dependent on the presence of Fe(2+) although supplemental Fe(2+) increases nitriles formation. Its function is as follows. Specifier protein that contributes to constitutive and herbivore-induced simple nitrile formation. Converts glucosinolates both to epithionitriles and to simple nitriles in the presence of myrosinase. Promotes the formation of epithionitriles after hydrolysis of alkenylglucosinolates containing a terminal double bond. Mediates indol-3-ylacetonitrile (IACN) production from indol-3-ylmethylglucosinolate (glucobrassicin). Triggers the production of 3,4-epithiobutylnitrile from 2-propenylisothiocyanate, product of 2-propenylglucosinolate (sinigrin) catalysis by myrosinase. Seems inactive toward benzylglucosinolate (glucotropaeolin). Acts as a negative regulator of senescence. The polypeptide is N-(sulfonatooxy)alkenimidothioic acid sulfate-lyase (epithionitrile-forming) (Arabidopsis thaliana (Mouse-ear cress)).